We begin with the raw amino-acid sequence, 136 residues long: Regulator of nucleoside diphosphate kinase (136 aa).

It belongs to the Rnk family. As to quaternary structure, interacts with the RNA polymerase.

May act as an anti-Gre factor. This is Regulator of nucleoside diphosphate kinase from Escherichia coli O6:H1 (strain CFT073 / ATCC 700928 / UPEC).